The following is a 393-amino-acid chain: Putative acid--amine ligase HI_0929 (393 aa).

103–105 (RFD) serves as a coordination point for ATP. D105, E117, and N119 together coordinate Mg(2+). ATP-binding positions include K267, K303, G310, Q343, and 378–380 (AVT).

The protein belongs to the glutathionylspermidine synthase preATP-grasp family.

Its function is as follows. May be a ligase forming an amide bond. Shows ATPase activity. The chain is Putative acid--amine ligase HI_0929 from Haemophilus influenzae (strain ATCC 51907 / DSM 11121 / KW20 / Rd).